Consider the following 289-residue polypeptide: E3 ubiquitin-protein ligase MARCHF1 (289 aa).

The segment at 1–66 (MLGWCEAIAR…SPTTGTAPRS (66 aa)) is responsible for low stability. The disordered stretch occupies residues 13–69 (HRIPNNTRTPEISGDLADASQTSTLNEKSPGRSASRSSNISKASSPTTGTAPRSQSR). Residues 43–58 (GRSASRSSNISKASSP) show a composition bias toward low complexity. A compositionally biased stretch (polar residues) spans 59–69 (TTGTAPRSQSR). An RING-CH-type zinc finger spans residues 72–133 (VCPSTQDICR…ELCKYDFIME (62 aa)). Positions 80, 83, 97, 99, 107, 110, 123, and 126 each coordinate Zn(2+). 2 helical membrane passes run 155-175 (IFCS…SLYV) and 197-217 (FWTK…FMYV). Residues 222–279 (YVQLWRRLKAYNRVIFVQNCPDTAKKLEKNFSCNVNTDIKDAVVVPVPQTGANSLPSA) form a responsible for down-regulation of CD86 and MHC class II cell surface expression region.

In terms of assembly, interacts with CD83; this interaction antagonizes MARCHF1-mediated MHC II and CD86 down-regulation. Ubiquitinated via ubiquitin-conjugating enzyme E2 D1/UBE2D1 independently of lysines, leading to proteolytic degradation. In terms of processing, has a short half-life. Instability/short half-life permits rapid changes that allow efficient induction of antigen presentation once antigen presenting cells, APCs, receive maturation signals. Small changes in protein levels significantly alter the cell surface display of MHC class II proteins. Expressed in antigen presenting cells, APCs, located in lymph nodes and spleen. Also expressed in lung. Expression is high in follicular B-cells, moderate in dendritic cells and low in splenic T-cells.

The protein resides in the golgi apparatus. It is found in the trans-Golgi network membrane. The protein localises to the lysosome membrane. Its subcellular location is the cytoplasmic vesicle membrane. It localises to the late endosome membrane. The protein resides in the early endosome membrane. It is found in the cell membrane. The catalysed reaction is S-ubiquitinyl-[E2 ubiquitin-conjugating enzyme]-L-cysteine + [acceptor protein]-L-lysine = [E2 ubiquitin-conjugating enzyme]-L-cysteine + N(6)-ubiquitinyl-[acceptor protein]-L-lysine.. The protein operates within protein modification; protein ubiquitination. Its function is as follows. E3 ubiquitin-protein ligase that mediates ubiquitination of TFRC, CD86, FAS and MHC class II proteins, such as HLA-DR alpha and beta, and promotes their subsequent endocytosis and sorting to lysosomes via multivesicular bodies. By constitutively ubiquitinating MHC class II proteins in immature dendritic cells, down-regulates their cell surface localization thus sequestering them in the intracellular endosomal system. Also regulates insulin sensitivity by controlling surface expression of the insulin receptor subunit beta/INSR by direct ubiquitination and degradation. (Microbial infection) Plays a role in iron metabolism by regulating the levels of the transferrin receptor TFRC during human cytomegalovirus infection, subsequently contributing to a proviral effect. This Homo sapiens (Human) protein is E3 ubiquitin-protein ligase MARCHF1.